Consider the following 402-residue polypeptide: Nodulation protein E (402 aa).

Residues Asp2–Gln401 enclose the Ketosynthase family 3 (KS3) domain. Residues Cys162, His294, and His331 each act as for beta-ketoacyl synthase activity in the active site. The helical transmembrane segment at His329–Ile348 threads the bilayer.

This sequence belongs to the thiolase-like superfamily. Beta-ketoacyl-ACP synthases family.

Its subcellular location is the cell inner membrane. Proposed to synthesize NOD factor fatty acyl chain. Involved in the synthesis of a highly unsaturated fatty acid moiety, which forms part of a lipo-oligosaccharide that is responsible for host specificity. The sequence is that of Nodulation protein E (nodE) from Rhizobium sp. (strain N33).